A 214-amino-acid chain; its full sequence is UBX domain-containing protein 10 (214 aa).

Over residues 1-13 the composition is skewed to basic residues; that stretch reads MHVTRPKSSKGRS. Residues 1–79 are disordered; sequence MHVTRPKSSK…AYDRPPEEPV (79 aa). Residues 16–25 show a composition bias toward polar residues; it reads MITNSSMIYT. The span at 49–60 shows a compositional bias: low complexity; it reads SLRSRAILRRSS. Residues 127 to 204 enclose the UBX domain; it reads PEESDLLLAI…GVLNKSVLCI (78 aa).

Belongs to the UBXN10 family.

It localises to the cell projection. Its subcellular location is the cilium. In terms of biological role, required for ciliogenesis. Acts as a tethering factor that facilitates recruitment of vcp/p97 to the intraflagellar transport complex B (IFT-B) in cilia. This Danio rerio (Zebrafish) protein is UBX domain-containing protein 10.